Consider the following 417-residue polypeptide: MPGTRGPRVAMLSVHTSPLDQPGTGDAGGMNVYVLELSRALARRGAEVEIFTRATSSAQPPVVDVQPGIRVLHVPAGPFEGLDKNDLPGQLCAFTAGVLRAEAHRSEGWYDVVHTHYWLSGQAGWLAAERWDVPLVHTMHTMARVKNAALAPGDVPEPQGRVIGEEQVVAASDALVASTREEAEDLVRLYGADLDRIHVVPPGVDLDTFTPPVPSDATARTALRERLGLPVDSPLILFAGRVQLLKGPDVLVQALEHLPEEVRLVVLGGASGRPTAVRELEALAHQCGVRDRVLVHPPVERRRLADWYRAADVVAVPSHNESFGLVAAEAQACGTPVVAAAVGGLRTVVLDDVNGVLVDGHDPLAWADVLGALLADDGRRARLAAGARAASRRFGWDEAAAAMLDVYAQATKRRPAR.

H15 contacts 1D-myo-inositol 3-phosphate. Residues 21-22 and G29 contribute to the UDP-N-acetyl-alpha-D-glucosamine site; that span reads QP. 1D-myo-inositol 3-phosphate-binding positions include 26 to 31, K84, Y117, T141, and R161; that span reads DAGGMN. UDP-N-acetyl-alpha-D-glucosamine contacts are provided by R241, K246, and V299. Mg(2+) contacts are provided by Y308, R309, and A311. Residues E321 and E329 each coordinate UDP-N-acetyl-alpha-D-glucosamine. T335 is a binding site for Mg(2+).

It belongs to the glycosyltransferase group 1 family. MshA subfamily. Homodimer.

It catalyses the reaction 1D-myo-inositol 3-phosphate + UDP-N-acetyl-alpha-D-glucosamine = 1D-myo-inositol 2-acetamido-2-deoxy-alpha-D-glucopyranoside 3-phosphate + UDP + H(+). In terms of biological role, catalyzes the transfer of a N-acetyl-glucosamine moiety to 1D-myo-inositol 3-phosphate to produce 1D-myo-inositol 2-acetamido-2-deoxy-glucopyranoside 3-phosphate in the mycothiol biosynthesis pathway. The protein is D-inositol 3-phosphate glycosyltransferase of Xylanimonas cellulosilytica (strain DSM 15894 / JCM 12276 / CECT 5975 / KCTC 9989 / LMG 20990 / NBRC 107835 / XIL07).